We begin with the raw amino-acid sequence, 312 residues long: Olfactory receptor 4F6 (312 aa).

Topologically, residues 1 to 25 are extracellular; that stretch reads MDEANHSVVSEFVFLGLSDSRKIQL. Asparagine 5 carries N-linked (GlcNAc...) asparagine glycosylation. A helical membrane pass occupies residues 26 to 49; sequence LLFLFFSVFYVSSLMGNLLIVLTV. At 50–57 the chain is on the cytoplasmic side; that stretch reads TSDPRLQS. The chain crosses the membrane as a helical span at residues 58-79; sequence PMYFLLANLSIINLVFCSSTAP. Over 80-100 the chain is Extracellular; it reads KMIYDLFRKHKTISFGGCVVQ. Cysteines 97 and 189 form a disulfide. The chain crosses the membrane as a helical span at residues 101 to 120; the sequence is IFFIHAVGGTEMVLLIAMAF. The Cytoplasmic segment spans residues 121 to 139; it reads DRYVAICKPLHYLTIMNPQ. A helical transmembrane segment spans residues 140-158; the sequence is RCILFLVISWIIGIIHSVI. Over 159–195 the chain is Extracellular; that stretch reads QLAFVVDLLFCGPNELDSFFCDLPRFIKLACIETYTL. The chain crosses the membrane as a helical span at residues 196 to 219; the sequence is GFMVTANSGFISLASFLILIISYI. Residues 220-235 are Cytoplasmic-facing; the sequence is FILVTVQKKSSGGIFK. A helical membrane pass occupies residues 236–258; sequence AFSMLSAHVIVVVLVFGPLIFFY. Over 259 to 269 the chain is Extracellular; it reads IFPFPTSHLDK. Residues 270 to 289 form a helical membrane-spanning segment; sequence FLAIFDAVITPVLNPVIYTF. Residues 290–312 lie on the Cytoplasmic side of the membrane; that stretch reads RNKEMMVAMRRRCSQFVNYSKIF.

It belongs to the G-protein coupled receptor 1 family.

It is found in the cell membrane. In terms of biological role, odorant receptor. The polypeptide is Olfactory receptor 4F6 (OR4F6) (Homo sapiens (Human)).